The sequence spans 1321 residues: Bile salt export pump (1321 aa).

At 1 to 62 (MSDSVILRSV…FSSSKDIWLM (62 aa)) the chain is on the cytoplasmic side. Residues 62–385 (MLMGGVCALL…ASSCLEIFST (324 aa)) enclose the ABC transmembrane type-1 1 domain. Residues 63–83 (LMGGVCALLHGMAQPGILIIF) form a helical membrane-spanning segment. The Extracellular segment spans residues 84-147 (GIMTDIFIKY…MIKFSGIYAG (64 aa)). N-linked (GlcNAc...) asparagine glycosylation is found at Asn109, Asn116, Asn122, and Asn125. A helical transmembrane segment spans residues 148–168 (VGMTVLILGYFQIRLWVITGA). Over 169-215 (RQIRRMRKIYFRRIMRMEIGWFDCTSVGELNSRFADDIEKINDAIAD) the chain is Cytoplasmic. The chain crosses the membrane as a helical span at residues 216–236 (QLAHFLQRMSTAMCGLLLGFY). Residues 237 to 240 (RGWK) lie on the Extracellular side of the membrane. Residues 241 to 261 (LTLVILAVSPLIGIGAAVIGL) form a helical membrane-spanning segment. Topologically, residues 262–319 (SIAKFTELELKAYAKAGSIADEVLSSIRTVAAFGGENKEVERYEKNLVFAQRWGIWKG) are cytoplasmic. The chain crosses the membrane as a helical span at residues 320-340 (MVMGFFTGYMWCLIFFCYALA). The Extracellular segment spans residues 341–353 (FWYGSTLVLDEEE). The helical transmembrane segment at 354 to 374 (YTPGTLVQIFLCVILAAMNIG) threads the bilayer. Topologically, residues 375 to 755 (HASSCLEIFS…KYNIPEWHYI (381 aa)) are cytoplasmic. An ABC transporter 1 domain is found at 420-656 (IEFHNVTFHY…KGVYFMLVTL (237 aa)). 455 to 462 (GSSGAGKS) is an ATP binding site. At Thr586 the chain carries Phosphothreonine. A Phosphoserine modification is found at Ser587. An interaction with HAX1 region spans residues 651 to 674 (FMLVTLQSQGDNAHKETSIMGKDA). Phosphoserine occurs at positions 692, 703, and 706. Residues 755-1043 (ILVGSLSAAI…TFSYTPSYAK (289 aa)) form the ABC transmembrane type-1 2 domain. Residues 756–776 (LVGSLSAAINGAVTPIYSLLF) traverse the membrane as a helical segment. At 777–794 (SQLLGTFSLLDKEQQRSE) the chain is on the extracellular side. A helical transmembrane segment spans residues 795–815 (IHSMCLFFVILGCVSIFTQFL). Topologically, residues 816–869 (QGYTFAKSGELLTKRLRKFGFKAMLGQDIGWFDDLRNNPGVLTTRLATDASQVQ) are cytoplasmic. Helical transmembrane passes span 870–890 (GATG…IAAL) and 891–911 (LIAF…FPFL). The Cytoplasmic portion of the chain corresponds to 912–979 (ALSGAVQTKM…SYKTAVRKAN (68 aa)). Residues 980–1000 (IYGLCFAFSQGIAFLANSAAY) form a helical membrane-spanning segment. Residues 1001–1011 (RYGGYLIAYEG) lie on the Extracellular side of the membrane. Residues 1012–1032 (LGFSHVFRVVSSVALSATAVG) form a helical membrane-spanning segment. Residues 1033-1321 (RTFSYTPSYA…KLVITGAPIS (289 aa)) lie on the Cytoplasmic side of the membrane. Positions 1078–1316 (IDFIDCKFTY…KGAYYKLVIT (239 aa)) constitute an ABC transporter 2 domain. 1113–1120 (GSSGCGKS) serves as a coordination point for ATP. At Ser1321 the chain carries Phosphoserine.

This sequence belongs to the ABC transporter superfamily. ABCB family. Multidrug resistance exporter (TC 3.A.1.201) subfamily. Interacts with HAX1. Interacts with the adapter protein complex 2 (AP-2) throught AP2A2 or AP2A1; this interaction regulates cell membrane expression of ABCB11 through its internalization in a clathrin-dependent manner and its subsequent degradation. In terms of processing, ubiquitinated; short-chain ubiquitination regulates cell-Surface expression of ABCB11. Post-translationally, N-glycosylated. In terms of tissue distribution, expressed predominantly, if not exclusively in the liver, where it was further localized to the canalicular microvilli and to subcanalicular vesicles of the hepatocytes by in situ.

Its subcellular location is the apical cell membrane. The protein resides in the recycling endosome membrane. It is found in the endosome. The protein localises to the cell membrane. It carries out the reaction cholate(in) + ATP + H2O = cholate(out) + ADP + phosphate + H(+). The catalysed reaction is taurocholate(in) + ATP + H2O = taurocholate(out) + ADP + phosphate + H(+). It catalyses the reaction glycocholate(in) + ATP + H2O = glycocholate(out) + ADP + phosphate + H(+). The enzyme catalyses glycochenodeoxycholate(in) + ATP + H2O = glycochenodeoxycholate(out) + ADP + phosphate + H(+). It carries out the reaction taurochenodeoxycholate(in) + ATP + H2O = taurochenodeoxycholate(out) + ADP + phosphate + H(+). The catalysed reaction is glycoursodeoxycholate(in) + ATP + H2O = glycoursodeoxycholate(out) + ADP + phosphate + H(+). It catalyses the reaction tauroursodeoxycholate(in) + ATP + H2O = tauroursodeoxycholate(out) + ADP + phosphate + H(+). The enzyme catalyses taurodeoxycholate(in) + ATP + H2O = taurodeoxycholate(out) + ADP + phosphate + H(+). It carries out the reaction pravastatin(in) + ATP + H2O = pravastatin(out) + ADP + phosphate + H(+). The uptake of taurocholate is inhibited by taurolithocholate sulfate with an IC(50) of 52.9 uM. Pravastatin competitively inhibits the transport of taurocholic acid. Cyclosporin A, glibenclamide, rifampicin and troglitazonestrongly competitively inhibit the transport activity of taurocholate. The canalicular transport activity of taurocholate is strongly dependent on canalicular membrane cholesterol content. The uptake of taurocholate is increased by short- and medium-chain fatty acids. Cholesterol increases transport capacity of taurocholate without affecting the affinity for the substrate. Its function is as follows. Catalyzes the transport of the major hydrophobic bile salts, such as taurine and glycine-conjugated cholic acid across the canalicular membrane of hepatocytes in an ATP-dependent manner, therefore participates in hepatic bile acid homeostasis and consequently to lipid homeostasis through regulation of biliary lipid secretion in a bile salts dependent manner. Transports taurine-conjugated bile salts more rapidly than glycine-conjugated bile salts. Also transports non-bile acid compounds, such as pravastatin and fexofenadine in an ATP-dependent manner and may be involved in their biliary excretion. The sequence is that of Bile salt export pump from Rattus norvegicus (Rat).